Here is a 446-residue protein sequence, read N- to C-terminus: Tubulin beta-6 chain (446 aa).

The MREI motif signature appears at M1–I4. Positions 11, 69, 138, 142, 143, 144, 204, and 226 each coordinate GTP. Mg(2+) is bound at residue E69. The segment at V419–T446 is disordered. Positions A430–A440 are enriched in acidic residues.

It belongs to the tubulin family. Dimer of alpha and beta chains. A typical microtubule is a hollow water-filled tube with an outer diameter of 25 nm and an inner diameter of 15 nM. Alpha-beta heterodimers associate head-to-tail to form protofilaments running lengthwise along the microtubule wall with the beta-tubulin subunit facing the microtubule plus end conferring a structural polarity. Microtubules usually have 13 protofilaments but different protofilament numbers can be found in some organisms and specialized cells. The cofactor is Mg(2+). Some glutamate residues at the C-terminus are polyglycylated, resulting in polyglycine chains on the gamma-carboxyl group. Glycylation is mainly limited to tubulin incorporated into axonemes (cilia and flagella) whereas glutamylation is prevalent in neuronal cells, centrioles, axonemes, and the mitotic spindle. Both modifications can coexist on the same protein on adjacent residues, and lowering polyglycylation levels increases polyglutamylation, and reciprocally. The precise function of polyglycylation is still unclear. In terms of processing, some glutamate residues at the C-terminus are polyglutamylated, resulting in polyglutamate chains on the gamma-carboxyl group. Polyglutamylation plays a key role in microtubule severing by spastin (SPAST). SPAST preferentially recognizes and acts on microtubules decorated with short polyglutamate tails: severing activity by SPAST increases as the number of glutamates per tubulin rises from one to eight, but decreases beyond this glutamylation threshold. As to expression, highly expressed in bone marrow.

The protein localises to the cytoplasm. The protein resides in the cytoskeleton. Functionally, tubulin is the major constituent of microtubules, a cylinder consisting of laterally associated linear protofilaments composed of alpha- and beta-tubulin heterodimers. Microtubules grow by the addition of GTP-tubulin dimers to the microtubule end, where a stabilizing cap forms. Below the cap, tubulin dimers are in GDP-bound state, owing to GTPase activity of alpha-tubulin. The chain is Tubulin beta-6 chain from Gallus gallus (Chicken).